Consider the following 95-residue polypeptide: Co-chaperonin GroES (95 aa).

It belongs to the GroES chaperonin family. As to quaternary structure, heptamer of 7 subunits arranged in a ring. Interacts with the chaperonin GroEL.

It localises to the cytoplasm. Functionally, together with the chaperonin GroEL, plays an essential role in assisting protein folding. The GroEL-GroES system forms a nano-cage that allows encapsulation of the non-native substrate proteins and provides a physical environment optimized to promote and accelerate protein folding. GroES binds to the apical surface of the GroEL ring, thereby capping the opening of the GroEL channel. This Xanthomonas axonopodis pv. citri (strain 306) protein is Co-chaperonin GroES.